Here is a 382-residue protein sequence, read N- to C-terminus: Queuine tRNA-ribosyltransferase (382 aa).

The Proton acceptor role is filled by Asp93. Substrate is bound by residues 93-97 (DSGGF), Asp147, Gln191, and Gly218. The tract at residues 249–255 (GVGKPED) is RNA binding. Residue Asp268 is the Nucleophile of the active site. Residues 273–277 (TRNAR) are RNA binding; important for wobble base 34 recognition. Zn(2+) is bound by residues Cys306, Cys308, Cys311, and His337.

The protein belongs to the queuine tRNA-ribosyltransferase family. Homodimer. Within each dimer, one monomer is responsible for RNA recognition and catalysis, while the other monomer binds to the replacement base PreQ1. It depends on Zn(2+) as a cofactor.

It carries out the reaction 7-aminomethyl-7-carbaguanine + guanosine(34) in tRNA = 7-aminomethyl-7-carbaguanosine(34) in tRNA + guanine. It participates in tRNA modification; tRNA-queuosine biosynthesis. In terms of biological role, catalyzes the base-exchange of a guanine (G) residue with the queuine precursor 7-aminomethyl-7-deazaguanine (PreQ1) at position 34 (anticodon wobble position) in tRNAs with GU(N) anticodons (tRNA-Asp, -Asn, -His and -Tyr). Catalysis occurs through a double-displacement mechanism. The nucleophile active site attacks the C1' of nucleotide 34 to detach the guanine base from the RNA, forming a covalent enzyme-RNA intermediate. The proton acceptor active site deprotonates the incoming PreQ1, allowing a nucleophilic attack on the C1' of the ribose to form the product. After dissociation, two additional enzymatic reactions on the tRNA convert PreQ1 to queuine (Q), resulting in the hypermodified nucleoside queuosine (7-(((4,5-cis-dihydroxy-2-cyclopenten-1-yl)amino)methyl)-7-deazaguanosine). The chain is Queuine tRNA-ribosyltransferase from Haemophilus influenzae (strain PittEE).